The primary structure comprises 164 residues: Endoribonuclease YbeY (164 aa).

Positions 114, 118, and 124 each coordinate Zn(2+).

This sequence belongs to the endoribonuclease YbeY family. Zn(2+) is required as a cofactor.

It localises to the cytoplasm. Single strand-specific metallo-endoribonuclease involved in late-stage 70S ribosome quality control and in maturation of the 3' terminus of the 16S rRNA. This is Endoribonuclease YbeY from Mycoplasmoides gallisepticum (strain R(low / passage 15 / clone 2)) (Mycoplasma gallisepticum).